A 100-amino-acid polypeptide reads, in one-letter code: Integration host factor subunit alpha 2 (100 aa).

This sequence belongs to the bacterial histone-like protein family. As to quaternary structure, heterodimer of an alpha and a beta chain.

In terms of biological role, this protein is one of the two subunits of integration host factor, a specific DNA-binding protein that functions in genetic recombination as well as in transcriptional and translational control. The sequence is that of Integration host factor subunit alpha 2 from Dechloromonas aromatica (strain RCB).